The following is a 189-amino-acid chain: Thermostable direct hemolysin (189 aa).

Positions 1–24 (MKYRHLAKKSFLFIFMLAAFKTFA) are cleaved as a signal peptide. A disulfide bridge links cysteine 175 with cysteine 185.

The protein belongs to the TDH hemolysin family. In terms of assembly, homodimer.

In terms of biological role, bacterial hemolysins are exotoxins that attack blood cell membranes and cause cell rupture by mechanisms not clearly defined. The polypeptide is Thermostable direct hemolysin (tdh) (Grimontia hollisae (Vibrio hollisae)).